A 71-amino-acid chain; its full sequence is Exodeoxyribonuclease 7 small subunit (71 aa).

It belongs to the XseB family. In terms of assembly, heterooligomer composed of large and small subunits.

The protein resides in the cytoplasm. The catalysed reaction is Exonucleolytic cleavage in either 5'- to 3'- or 3'- to 5'-direction to yield nucleoside 5'-phosphates.. Its function is as follows. Bidirectionally degrades single-stranded DNA into large acid-insoluble oligonucleotides, which are then degraded further into small acid-soluble oligonucleotides. This chain is Exodeoxyribonuclease 7 small subunit, found in Endomicrobium trichonymphae.